A 148-amino-acid polypeptide reads, in one-letter code: UPF0260 protein ESA_01462 (148 aa).

The protein belongs to the UPF0260 family.

The protein is UPF0260 protein ESA_01462 of Cronobacter sakazakii (strain ATCC BAA-894) (Enterobacter sakazakii).